The sequence spans 99 residues: Malonate decarboxylase acyl carrier protein (99 aa).

O-(phosphoribosyl dephospho-coenzyme A)serine is present on S25.

It belongs to the MdcC family. Covalently binds the prosthetic group of malonate decarboxylase.

The protein resides in the cytoplasm. Functionally, subunit of malonate decarboxylase, it is an acyl carrier protein to which acetyl and malonyl thioester residues are bound via a 2'-(5''-phosphoribosyl)-3'-dephospho-CoA prosthetic group and turn over during the catalytic mechanism. This Pseudomonas paraeruginosa (strain DSM 24068 / PA7) (Pseudomonas aeruginosa (strain PA7)) protein is Malonate decarboxylase acyl carrier protein.